Reading from the N-terminus, the 94-residue chain is DNA gyrase subunit A (94 aa).

Positions 35–94 (LPDVRDGLKPVHRRILYGLNEQGMTPDKPYKKSARIVGDVMGKYHPHGDSSIYEAMVRMA) constitute a Topo IIA-type catalytic domain.

The protein belongs to the type II topoisomerase GyrA/ParC subunit family. In terms of assembly, heterotetramer, composed of two GyrA and two GyrB chains. In the heterotetramer, GyrA contains the active site tyrosine that forms a transient covalent intermediate with DNA, while GyrB binds cofactors and catalyzes ATP hydrolysis.

Its subcellular location is the cytoplasm. The catalysed reaction is ATP-dependent breakage, passage and rejoining of double-stranded DNA.. Functionally, a type II topoisomerase that negatively supercoils closed circular double-stranded (ds) DNA in an ATP-dependent manner to modulate DNA topology and maintain chromosomes in an underwound state. Negative supercoiling favors strand separation, and DNA replication, transcription, recombination and repair, all of which involve strand separation. Also able to catalyze the interconversion of other topological isomers of dsDNA rings, including catenanes and knotted rings. Type II topoisomerases break and join 2 DNA strands simultaneously in an ATP-dependent manner. The protein is DNA gyrase subunit A of Staphylococcus epidermidis.